A 326-amino-acid polypeptide reads, in one-letter code: ATP-dependent 6-phosphofructokinase (326 aa).

Gly14 provides a ligand contact to ATP. 24 to 28 (RAVVR) provides a ligand contact to ADP. Residues 75 to 76 (RF) and 105 to 108 (GNGS) each bind ATP. Residue Asn106 participates in Mg(2+) binding. 129-131 (TID) contacts substrate. The active-site Proton acceptor is Asp131. Position 158 (Arg158) interacts with ADP. Substrate is bound by residues Arg166 and 173-175 (MGR). Residues 189 to 191 (GAE), Lys215, and 216 to 218 (KSA) contribute to the ADP site. Substrate-binding positions include Glu225, Arg248, and 254-257 (HTQR).

It belongs to the phosphofructokinase type A (PFKA) family. ATP-dependent PFK group I subfamily. Prokaryotic clade 'B1' sub-subfamily. In terms of assembly, homotetramer. Requires Mg(2+) as cofactor.

The protein resides in the cytoplasm. The catalysed reaction is beta-D-fructose 6-phosphate + ATP = beta-D-fructose 1,6-bisphosphate + ADP + H(+). It participates in carbohydrate degradation; glycolysis; D-glyceraldehyde 3-phosphate and glycerone phosphate from D-glucose: step 3/4. Allosterically activated by ADP and other diphosphonucleosides, and allosterically inhibited by phosphoenolpyruvate. Functionally, catalyzes the phosphorylation of D-fructose 6-phosphate to fructose 1,6-bisphosphate by ATP, the first committing step of glycolysis. The sequence is that of ATP-dependent 6-phosphofructokinase from Coxiella burnetii (strain RSA 493 / Nine Mile phase I).